Here is a 180-residue protein sequence, read N- to C-terminus: Endoribonuclease YbeY (180 aa).

Zn(2+)-binding residues include His149, His153, and His159.

Belongs to the endoribonuclease YbeY family. It depends on Zn(2+) as a cofactor.

It is found in the cytoplasm. Single strand-specific metallo-endoribonuclease involved in late-stage 70S ribosome quality control and in maturation of the 3' terminus of the 16S rRNA. This chain is Endoribonuclease YbeY, found in Prochlorococcus marinus subsp. pastoris (strain CCMP1986 / NIES-2087 / MED4).